Consider the following 160-residue polypeptide: Crossover junction endodeoxyribonuclease RuvC (160 aa).

Catalysis depends on residues Asp-9, Glu-68, and Asp-141. Mg(2+) contacts are provided by Asp-9, Glu-68, and Asp-141.

It belongs to the RuvC family. In terms of assembly, homodimer which binds Holliday junction (HJ) DNA. The HJ becomes 2-fold symmetrical on binding to RuvC with unstacked arms; it has a different conformation from HJ DNA in complex with RuvA. In the full resolvosome a probable DNA-RuvA(4)-RuvB(12)-RuvC(2) complex forms which resolves the HJ. Mg(2+) is required as a cofactor.

It localises to the cytoplasm. It catalyses the reaction Endonucleolytic cleavage at a junction such as a reciprocal single-stranded crossover between two homologous DNA duplexes (Holliday junction).. Functionally, the RuvA-RuvB-RuvC complex processes Holliday junction (HJ) DNA during genetic recombination and DNA repair. Endonuclease that resolves HJ intermediates. Cleaves cruciform DNA by making single-stranded nicks across the HJ at symmetrical positions within the homologous arms, yielding a 5'-phosphate and a 3'-hydroxyl group; requires a central core of homology in the junction. The consensus cleavage sequence is 5'-(A/T)TT(C/G)-3'. Cleavage occurs on the 3'-side of the TT dinucleotide at the point of strand exchange. HJ branch migration catalyzed by RuvA-RuvB allows RuvC to scan DNA until it finds its consensus sequence, where it cleaves and resolves the cruciform DNA. The polypeptide is Crossover junction endodeoxyribonuclease RuvC (Campylobacter jejuni subsp. jejuni serotype O:2 (strain ATCC 700819 / NCTC 11168)).